Consider the following 459-residue polypeptide: Putrescine aminotransferase (459 aa).

Residues Gly150–Thr151 and Gln274 contribute to the pyridoxal 5'-phosphate site. Position 300 is an N6-(pyridoxal phosphate)lysine (Lys300). Residue Thr332 participates in pyridoxal 5'-phosphate binding.

The protein belongs to the class-III pyridoxal-phosphate-dependent aminotransferase family. Putrescine aminotransferase subfamily. Pyridoxal 5'-phosphate is required as a cofactor.

The catalysed reaction is an alkane-alpha,omega-diamine + 2-oxoglutarate = an omega-aminoaldehyde + L-glutamate. It catalyses the reaction putrescine + 2-oxoglutarate = 1-pyrroline + L-glutamate + H2O. The enzyme catalyses cadaverine + 2-oxoglutarate = 5-aminopentanal + L-glutamate. Its pathway is amine and polyamine degradation; putrescine degradation; 4-aminobutanal from putrescine (transaminase route): step 1/1. In terms of biological role, catalyzes the aminotransferase reaction from putrescine to 2-oxoglutarate, leading to glutamate and 4-aminobutanal, which spontaneously cyclizes to form 1-pyrroline. This is the first step in one of two pathways for putrescine degradation, where putrescine is converted into 4-aminobutanoate (gamma-aminobutyrate or GABA) via 4-aminobutanal. Also functions as a cadaverine transaminase in a a L-lysine degradation pathway to succinate that proceeds via cadaverine, glutarate and L-2-hydroxyglutarate. The chain is Putrescine aminotransferase from Klebsiella pneumoniae subsp. pneumoniae (strain ATCC 700721 / MGH 78578).